Reading from the N-terminus, the 381-residue chain is uncharacterized protein (381 aa).

The segment at 176–292 (HAAGKIKKSK…EPMVDETPQN (117 aa)) is disordered. The segment covering 177-186 (AAGKIKKSKN) has biased composition (basic residues). The segment covering 187 to 212 (QKKDGTLSRPLGKKENKSVVKVKIEE) has biased composition (basic and acidic residues). The span at 276–286 (DEEDEDEEPMV) shows a compositional bias: acidic residues.

This is an uncharacterized protein from Caenorhabditis elegans.